We begin with the raw amino-acid sequence, 792 residues long: Leucine--tRNA ligase (792 aa).

The 'HIGH' region signature appears at 39–50; it reads PYPSAAGLHLGH. Residues 569–573 carry the 'KMSKS' region motif; that stretch reads KMSKS. K572 contacts ATP.

This sequence belongs to the class-I aminoacyl-tRNA synthetase family.

The protein localises to the cytoplasm. The catalysed reaction is tRNA(Leu) + L-leucine + ATP = L-leucyl-tRNA(Leu) + AMP + diphosphate. This Mycoplasma genitalium (strain ATCC 33530 / DSM 19775 / NCTC 10195 / G37) (Mycoplasmoides genitalium) protein is Leucine--tRNA ligase.